Reading from the N-terminus, the 98-residue chain is Large ribosomal subunit protein uL23 (98 aa).

This sequence belongs to the universal ribosomal protein uL23 family. Part of the 50S ribosomal subunit. Contacts protein L29, and trigger factor when it is bound to the ribosome.

In terms of biological role, one of the early assembly proteins it binds 23S rRNA. One of the proteins that surrounds the polypeptide exit tunnel on the outside of the ribosome. Forms the main docking site for trigger factor binding to the ribosome. The polypeptide is Large ribosomal subunit protein uL23 (Halorhodospira halophila (strain DSM 244 / SL1) (Ectothiorhodospira halophila (strain DSM 244 / SL1))).